The following is a 184-amino-acid chain: Leucine-rich repeat-containing protein 20 (184 aa).

LRR repeat units lie at residues 51 to 72 (QIHL…FMTT), 75 to 96 (QLRE…VSAL), 98 to 120 (HLKA…TALP), 121 to 141 (ALET…EKLA), and 145 to 167 (ALRS…APPL). The residue at position 175 (Ser175) is a Phosphoserine.

The polypeptide is Leucine-rich repeat-containing protein 20 (LRRC20) (Homo sapiens (Human)).